We begin with the raw amino-acid sequence, 299 residues long: MNILLFGKTGQVGWELQRALAPLGNLIALDVHSTDYCGDFSNPEGVAETVKKIRPDVIVNAAAHTAVDKAESEPNFAQLLNATCVEAIAKAANEVGAWVIHYSTDYVFPGNGDTPWLETDATAPLNVYGETKLAGEKALQEHCAKHLIFRTSWVYAGKGNNFAKTMLRLAKEREELAVINDQFGAPTGAELLADCTAHAIRVAANKPEVAGLYHLVAGGTTTWHDYAALVFEEARRAGINLALNKLNAVPTTAYPTPARRPHNSRLNTEKFQQNFALVLPDWQVGVKRMLNELFTTTAI.

NADH is bound by residues 10-12, aspartate 30, 39-40, and 63-65; these read GQV, DF, and AHT. Residue 11-12 coordinates NADPH; the sequence is QV. Residues 39-40, 63-65, and tyrosine 102 contribute to the NADPH site; these read DF and AHT. 104 to 105 provides a ligand contact to dTDP-beta-L-rhamnose; sequence TD. The NADH site is built by tyrosine 128 and lysine 132. The NADPH site is built by tyrosine 128 and lysine 132. Tyrosine 128 acts as the Proton donor/acceptor in catalysis. A dTDP-beta-L-rhamnose-binding site is contributed by tryptophan 153.

It belongs to the dTDP-4-dehydrorhamnose reductase family. In terms of assembly, homodimer. Requires Mg(2+) as cofactor.

It carries out the reaction dTDP-beta-L-rhamnose + NADP(+) = dTDP-4-dehydro-beta-L-rhamnose + NADPH + H(+). It participates in carbohydrate biosynthesis; dTDP-L-rhamnose biosynthesis. The protein operates within bacterial outer membrane biogenesis; LPS O-antigen biosynthesis. Functionally, involved in the biosynthesis of the dTDP-L-rhamnose which is an important component of lipopolysaccharide (LPS). Catalyzes the reduction of dTDP-6-deoxy-L-lyxo-4-hexulose to yield dTDP-L-rhamnose. RmlD uses NADH and NADPH nearly equally well. This is dTDP-4-dehydrorhamnose reductase from Shigella flexneri.